The primary structure comprises 577 residues: Aspartate--tRNA ligase (577 aa).

L-aspartate is bound at residue Glu-169. The aspartate stretch occupies residues 193 to 196; the sequence is QLYK. Arg-215 serves as a coordination point for L-aspartate. ATP contacts are provided by residues 215-217 and Gln-224; that span reads RDE. L-aspartate is bound at residue His-440. Glu-474 is a binding site for ATP. Arg-481 provides a ligand contact to L-aspartate. 526–529 is an ATP binding site; the sequence is GIDR.

This sequence belongs to the class-II aminoacyl-tRNA synthetase family. Type 1 subfamily. As to quaternary structure, homodimer.

It is found in the cytoplasm. The catalysed reaction is tRNA(Asp) + L-aspartate + ATP = L-aspartyl-tRNA(Asp) + AMP + diphosphate. In terms of biological role, catalyzes the attachment of L-aspartate to tRNA(Asp) in a two-step reaction: L-aspartate is first activated by ATP to form Asp-AMP and then transferred to the acceptor end of tRNA(Asp). The protein is Aspartate--tRNA ligase of Mesoplasma florum (strain ATCC 33453 / NBRC 100688 / NCTC 11704 / L1) (Acholeplasma florum).